Here is a 435-residue protein sequence, read N- to C-terminus: Serine--tRNA ligase (435 aa).

233–235 (TAE) contacts L-serine. 264-266 (RAE) provides a ligand contact to ATP. L-serine is bound at residue Glu287. 351–354 (EISS) contributes to the ATP binding site. Ser386 lines the L-serine pocket.

This sequence belongs to the class-II aminoacyl-tRNA synthetase family. Type-1 seryl-tRNA synthetase subfamily. As to quaternary structure, homodimer. The tRNA molecule binds across the dimer.

The protein localises to the cytoplasm. It carries out the reaction tRNA(Ser) + L-serine + ATP = L-seryl-tRNA(Ser) + AMP + diphosphate + H(+). It catalyses the reaction tRNA(Sec) + L-serine + ATP = L-seryl-tRNA(Sec) + AMP + diphosphate + H(+). The protein operates within aminoacyl-tRNA biosynthesis; selenocysteinyl-tRNA(Sec) biosynthesis; L-seryl-tRNA(Sec) from L-serine and tRNA(Sec): step 1/1. Functionally, catalyzes the attachment of serine to tRNA(Ser). Is also able to aminoacylate tRNA(Sec) with serine, to form the misacylated tRNA L-seryl-tRNA(Sec), which will be further converted into selenocysteinyl-tRNA(Sec). The sequence is that of Serine--tRNA ligase from Anaeromyxobacter dehalogenans (strain 2CP-C).